The sequence spans 156 residues: uncharacterized protein (156 aa).

The first 18 residues, 1–18, serve as a signal peptide directing secretion; the sequence is MKKLLSIFLMAFSLNAFA. The region spanning 19 to 156 is the Thioredoxin domain; it reads QTNLADVQLK…AEQIRVFAEK (138 aa). An intrachain disulfide couples C54 to C57.

Belongs to the thioredoxin family.

This is an uncharacterized protein from Haemophilus influenzae (strain ATCC 51907 / DSM 11121 / KW20 / Rd).